Here is a 369-residue protein sequence, read N- to C-terminus: Glutamate 5-kinase (369 aa).

Lys-9 contacts ATP. Residues Ser-49, Asp-136, and Asn-148 each contribute to the substrate site. ATP-binding positions include 168 to 169 and 210 to 216; these read TD and TGGMLTK. A PUA domain is found at 275–355; the sequence is QGSIWVDKGA…KGVLIYRDDW (81 aa).

The protein belongs to the glutamate 5-kinase family.

It is found in the cytoplasm. It carries out the reaction L-glutamate + ATP = L-glutamyl 5-phosphate + ADP. It participates in amino-acid biosynthesis; L-proline biosynthesis; L-glutamate 5-semialdehyde from L-glutamate: step 1/2. In terms of biological role, catalyzes the transfer of a phosphate group to glutamate to form L-glutamate 5-phosphate. This Streptococcus pneumoniae serotype 4 (strain ATCC BAA-334 / TIGR4) protein is Glutamate 5-kinase.